We begin with the raw amino-acid sequence, 159 residues long: Protein SPA, chloroplastic (159 aa).

A chloroplast-targeting transit peptide spans Met1–Lys47. A helical membrane pass occupies residues Val56–Tyr76. The tract at residues Lys85 to Ile145 is CR-type-like. CXXCXGXG motif repeat units follow at residues Cys92–Gly99, Cys103–Gly110, Cys126–Gly133, and Cys137–Gly144.

In terms of tissue distribution, expressed in source leaves. Lower levels of expression in fruits and stems.

Its subcellular location is the plastid. The protein resides in the chloroplast thylakoid membrane. Its function is as follows. Participates in determining harvest index (HI) by affecting source-sink carbon distribution. Up-regulates the conversion of fixed carbon to exportable sugars. In Solanum lycopersicum (Tomato), this protein is Protein SPA, chloroplastic.